A 540-amino-acid polypeptide reads, in one-letter code: BTB/POZ domain-containing protein 6-A (540 aa).

Residues 138–208 form the BTB domain; it reads ADVHFIVGPP…MYSDEIELAP (71 aa).

In terms of assembly, interacts with cul3. Interacts (via BTB domain) with zbtb16/plzf. Expressed in the developing central nervous system.

The protein resides in the cytoplasm. It is found in the nucleus. Adapter protein for the cul3 E3 ubiquitin-protein ligase complex. Promotes the export of zbtb16/plzf from the nucleus to the cytoplasm and targets zbtb16/plzf for ubiquitination and degradation. Up-regulates neurog1 expression and antagonizes zbtb16/plzf, to promote neurogenesis. This Danio rerio (Zebrafish) protein is BTB/POZ domain-containing protein 6-A (btbd6a).